The chain runs to 336 residues: Tryptophan--tRNA ligase 1 (336 aa).

ATP contacts are provided by residues 9–11 (KPT) and 17–18 (GN). The short motif at 10-18 (PTGHLTLGN) is the 'HIGH' region element. L-tryptophan is bound at residue Asp137. ATP contacts are provided by residues 149 to 151 (GED), Val188, and 197 to 201 (KMGKS). Positions 197 to 201 (KMGKS) match the 'KMSKS' region motif.

It belongs to the class-I aminoacyl-tRNA synthetase family. In terms of assembly, homodimer.

Its subcellular location is the cytoplasm. It catalyses the reaction tRNA(Trp) + L-tryptophan + ATP = L-tryptophyl-tRNA(Trp) + AMP + diphosphate + H(+). Functionally, catalyzes the attachment of tryptophan to tRNA(Trp). This chain is Tryptophan--tRNA ligase 1, found in Streptomyces coelicolor (strain ATCC BAA-471 / A3(2) / M145).